We begin with the raw amino-acid sequence, 63 residues long: Hyphancin-3D (63 aa).

Positions 1-22 (MNFSRIIFLVFACFVALASVSA) are cleaved as a signal peptide. A propeptide spans 23 to 26 (APEP) (removed by a dipeptidylpeptidase). Leucine amide is present on Leu-61.

Belongs to the cecropin family.

Its subcellular location is the secreted. Has antibacterial activity. The sequence is that of Hyphancin-3D from Hyphantria cunea (Fall webworm moth).